We begin with the raw amino-acid sequence, 234 residues long: Large ribosomal subunit protein uL1c (234 aa).

The protein belongs to the universal ribosomal protein uL1 family. In terms of assembly, part of the 50S ribosomal subunit.

It is found in the plastid. It localises to the chloroplast. In terms of biological role, binds directly to 23S rRNA. Might be involved in E site tRNA release (Potential). The protein is Large ribosomal subunit protein uL1c (rpl1) of Guillardia theta (Cryptophyte).